We begin with the raw amino-acid sequence, 103 residues long: Pyrimidine/purine nucleoside phosphorylase (103 aa).

Belongs to the nucleoside phosphorylase PpnP family.

It catalyses the reaction a purine D-ribonucleoside + phosphate = a purine nucleobase + alpha-D-ribose 1-phosphate. The catalysed reaction is adenosine + phosphate = alpha-D-ribose 1-phosphate + adenine. The enzyme catalyses cytidine + phosphate = cytosine + alpha-D-ribose 1-phosphate. It carries out the reaction guanosine + phosphate = alpha-D-ribose 1-phosphate + guanine. It catalyses the reaction inosine + phosphate = alpha-D-ribose 1-phosphate + hypoxanthine. The catalysed reaction is thymidine + phosphate = 2-deoxy-alpha-D-ribose 1-phosphate + thymine. The enzyme catalyses uridine + phosphate = alpha-D-ribose 1-phosphate + uracil. It carries out the reaction xanthosine + phosphate = alpha-D-ribose 1-phosphate + xanthine. Its function is as follows. Catalyzes the phosphorolysis of diverse nucleosides, yielding D-ribose 1-phosphate and the respective free bases. Can use uridine, adenosine, guanosine, cytidine, thymidine, inosine and xanthosine as substrates. Also catalyzes the reverse reactions. The polypeptide is Pyrimidine/purine nucleoside phosphorylase (Sulfurovum sp. (strain NBC37-1)).